Here is a 45-residue protein sequence, read N- to C-terminus: uncharacterized protein (45 aa).

This is an uncharacterized protein from Methanocaldococcus jannaschii (strain ATCC 43067 / DSM 2661 / JAL-1 / JCM 10045 / NBRC 100440) (Methanococcus jannaschii).